The primary structure comprises 224 residues: Mammalian ependymin-related protein 1 (224 aa).

The signal sequence occupies residues 1 to 37 (MLTRAPRRLVQGPRETWLLGGLWVWILCGLGMAGSPG). Intrachain disulfides connect Cys-42-Cys-172, Cys-88-Cys-222, and Cys-113-Cys-210. N-linked (GlcNAc...) asparagine glycosylation is found at Asn-130 and Asn-182.

The protein belongs to the ependymin family. As to quaternary structure, homodimer. Post-translationally, N-glycosylated; the glycan contains mannose-6-phosphate moieties. In terms of tissue distribution, detected in brain (at protein level).

Its subcellular location is the lysosome lumen. It localises to the secreted. Functionally, binds anionic lipids and gangliosides at acidic pH. The sequence is that of Mammalian ependymin-related protein 1 (Epdr1) from Rattus norvegicus (Rat).